Reading from the N-terminus, the 266-residue chain is Phosphatidate cytidylyltransferase (266 aa).

Helical transmembrane passes span 16–36 (FVLI…LFWA), 52–72 (LFQV…WVAA), 78–98 (PIEC…YQKA), 101–121 (SEAI…FGVY), 125–145 (GAVA…GAFF), 164–184 (LEGA…VGMG), 186–206 (LSGG…VAVF), and 237–257 (LDSM…LEIW).

It belongs to the CDS family.

It is found in the cell inner membrane. The catalysed reaction is a 1,2-diacyl-sn-glycero-3-phosphate + CTP + H(+) = a CDP-1,2-diacyl-sn-glycerol + diphosphate. The protein operates within phospholipid metabolism; CDP-diacylglycerol biosynthesis; CDP-diacylglycerol from sn-glycerol 3-phosphate: step 3/3. This chain is Phosphatidate cytidylyltransferase (cdsA), found in Helicobacter pylori (strain ATCC 700392 / 26695) (Campylobacter pylori).